Here is a 339-residue protein sequence, read N- to C-terminus: Ketol-acid reductoisomerase (NADP(+)) (339 aa).

Residues 1 to 182 form the KARI N-terminal Rossmann domain; it reads MRVYYDRDAD…GGGRSGVIET (182 aa). Residues 24-27, arginine 48, serine 51, threonine 53, and 83-86 each bind NADP(+); these read YGSQ and DELQ. Residue histidine 108 is part of the active site. Glycine 134 contacts NADP(+). The 146-residue stretch at 183-328 folds into the KARI C-terminal knotted domain; the sequence is TFKEECETDL…GKLRAMMPWI (146 aa). Mg(2+) contacts are provided by aspartate 191, glutamate 195, glutamate 227, and glutamate 231. Serine 252 is a substrate binding site.

This sequence belongs to the ketol-acid reductoisomerase family. The cofactor is Mg(2+).

The enzyme catalyses (2R)-2,3-dihydroxy-3-methylbutanoate + NADP(+) = (2S)-2-acetolactate + NADPH + H(+). It catalyses the reaction (2R,3R)-2,3-dihydroxy-3-methylpentanoate + NADP(+) = (S)-2-ethyl-2-hydroxy-3-oxobutanoate + NADPH + H(+). The protein operates within amino-acid biosynthesis; L-isoleucine biosynthesis; L-isoleucine from 2-oxobutanoate: step 2/4. Its pathway is amino-acid biosynthesis; L-valine biosynthesis; L-valine from pyruvate: step 2/4. Involved in the biosynthesis of branched-chain amino acids (BCAA). Catalyzes an alkyl-migration followed by a ketol-acid reduction of (S)-2-acetolactate (S2AL) to yield (R)-2,3-dihydroxy-isovalerate. In the isomerase reaction, S2AL is rearranged via a Mg-dependent methyl migration to produce 3-hydroxy-3-methyl-2-ketobutyrate (HMKB). In the reductase reaction, this 2-ketoacid undergoes a metal-dependent reduction by NADPH to yield (R)-2,3-dihydroxy-isovalerate. The protein is Ketol-acid reductoisomerase (NADP(+)) of Brucella suis (strain ATCC 23445 / NCTC 10510).